A 306-amino-acid chain; its full sequence is Glutaminase (306 aa).

Ser-64, Asn-115, Glu-159, Asn-166, Tyr-190, Tyr-242, and Val-260 together coordinate substrate.

The protein belongs to the glutaminase family. Homotetramer.

It catalyses the reaction L-glutamine + H2O = L-glutamate + NH4(+). In Vibrio parahaemolyticus serotype O3:K6 (strain RIMD 2210633), this protein is Glutaminase.